The chain runs to 216 residues: MQYLAIAVIVALAGLSAAAHKPAYYDDNMANQMVDQIVKSLTTKKELDPFKIEQTKVPIDKKIGLIHIKGSATIKNAVITGLSHISRRGDAKIDTDGGAFAATLKLGDKNIRIKTDLHLDLGKIIHPNLKFEGHIGDIDMKLKLKLDAEGKPSLDQFEIDEFEQVELFIHGLGPLDPLVDVIADSFVKYFNPQARKLVTDMLKPILVEEIKKLKLN.

Positions 1–19 (MQYLAIAVIVALAGLSAAA) are cleaved as a signal peptide.

Belongs to the mite group 7 allergen family.

Its subcellular location is the secreted. The protein is Mite allergen Lep d 7 of Lepidoglyphus destructor (Storage mite).